The chain runs to 1149 residues: Protein deacetylase HDAC6 (1149 aa).

The disordered stretch occupies residues 1 to 61; that stretch reads MTSTGQDSST…KGKMKKLSQP (61 aa). Over residues 18–29 the composition is skewed to polar residues; that stretch reads NPQSPLQESSAT. S21 carries the post-translational modification Phosphoserine. R32 is modified (omega-N-methylarginine). The residue at position 43 (S43) is a Phosphoserine. The short motif at 66–75 is the Nuclear export signal element; that stretch reads LVVGLQGLDL. 2 histone deacetylase regions span residues 87–403 and 481–799; these read LVFD…TLLG and GLVY…SLLG. The active-site 1 is the H215. Residue H610 is the 2 of the active site. Residues 954–975 form a disordered region; it reads ALGETEPTPPASHTNKQTTGAS. A phosphothreonine mark is found at T958, T961, T967, and T971. Residues 964–975 show a composition bias toward polar residues; it reads ASHTNKQTTGAS. A Phosphoserine modification is found at S975. The segment at 1045 to 1143 adopts a UBP-type zinc-finger fold; sequence SWCPHLMAVC…NAAHQNKFGE (99 aa). Zn(2+) contacts are provided by C1047, H1049, C1067, C1070, C1079, C1082, and C1087. Residues 1088–1090 form a ubiquitin binding region; sequence SRY. 5 residues coordinate Zn(2+): H1094, H1098, H1104, C1117, and C1120. The ubiquitin binding stretch occupies residues 1116–1123; that stretch reads WCYVCQAY. Phosphoserine is present on S1148.

This sequence belongs to the histone deacetylase family. HD type 2 subfamily. As to quaternary structure, forms a trimeric complex in the nucleus consisting of BANP, HDAC6 and KHDRBS1/SAM68; HDAC6 keeps KHDRBS1 in a deacetylated state which inhibits the inclusion of CD44 alternate exons. The complex is disrupted by MAPK1/MAPK3-mediated phosphorylation of BANP which results in BANP export to the cytoplasm. This facilitates acetylation of KHDRBS1 and CD44 variant exon inclusion. Interacts with SIRT2 (via both phosphorylated, unphosphorylated, active or inactive forms); the interaction is necessary for the complex to interact with alpha-tubulin. Under proteasome impairment conditions, interacts with UBD via its histone deacetylase 1 and UBP-type zinc-finger regions. Interacts with BBIP1, CBFA2T3, CYLD, DDIT3/CHOP, ZMYND15, F-actin and HDAC11. Interacts with RIPOR2; this interaction occurs during early myogenic differentiation and prevents HDAC6 to deacetylate tubulin. Interacts with AURKA; AURKA-mediated phosphorylation of HDAC6 promotes deacetylation of alpha-tubulin. Interacts with DYSF; this interaction occurs during early myogenic differentiation. Interacts with TPPP; inhibiting the tubulin deacetylase activity of HDAC6. Interacts with DYNLL1. Interacts with ATP13A2; the interaction results in recruitment of HDAC6 to lysosomes to promote CTTN deacetylation. Interacts with CCDC141 (via the N-terminal region); inhibiting the deacetylase activity of HDAC6. Interacts with IPO7; the interaction facilitates HDAC6 nuclear translocation in dental papilla cells. It depends on Zn(2+) as a cofactor. In terms of processing, phosphorylated by AURKA; phosphorylation increases HDAC6-mediated deacetylation of alpha-tubulin and subsequent disassembly of cilia. Ubiquitinated. Its polyubiquitination however does not lead to its degradation. Post-translationally, sumoylated in vitro. In terms of tissue distribution, expressed in neurons of the cortex. Expressed in Purkinje cells. Detected in keratinocytes (at protein level).

It localises to the cytoplasm. The protein localises to the cytoskeleton. The protein resides in the nucleus. Its subcellular location is the perikaryon. It is found in the cell projection. It localises to the dendrite. The protein localises to the axon. The protein resides in the cilium. Its subcellular location is the microtubule organizing center. It is found in the centrosome. It localises to the cilium basal body. It catalyses the reaction N(6)-acetyl-L-lysyl-[protein] + H2O = L-lysyl-[protein] + acetate. The catalysed reaction is N(6)-acetyl-L-lysyl-[alpha-tubulin] + H2O = L-lysyl-[alpha-tubulin] + acetate. Its pathway is protein modification; protein ubiquitination. In terms of biological role, deacetylates a wide range of non-histone substrates. Plays a central role in microtubule-dependent cell motility by mediating deacetylation of tubulin. Required for cilia disassembly via deacetylation of alpha-tubulin. Alpha-tubulin deacetylation results in destabilization of dynamic microtubules. Promotes deacetylation of CTTN, leading to actin polymerization, promotion of autophagosome-lysosome fusion and completion of autophagy. Deacetylates SQSTM1. Deacetylates peroxiredoxins PRDX1 and PRDX2, decreasing their reducing activity. Deacetylates antiviral protein RIGI in the presence of viral mRNAs which is required for viral RNA detection by RIGI. Sequentially deacetylates and polyubiquitinates DNA mismatch repair protein MSH2 which leads to MSH2 degradation, reducing cellular sensitivity to DNA-damaging agents and decreasing cellular DNA mismatch repair activities. Deacetylates DNA mismatch repair protein MLH1 which prevents recruitment of the MutL alpha complex (formed by the MLH1-PMS2 heterodimer) to the MutS alpha complex (formed by the MSH2-MSH6 heterodimer), leading to tolerance of DNA damage. Deacetylates RHOT1/MIRO1 which blocks mitochondrial transport and mediates axon growth inhibition. Deacetylates transcription factor SP1 which leads to increased expression of ENG, positively regulating angiogenesis. Deacetylates KHDRBS1/SAM68 which regulates alternative splicing by inhibiting the inclusion of CD44 alternate exons. Promotes odontoblast differentiation following IPO7-mediated nuclear import and subsequent repression of RUNX2 expression. In addition to its protein deacetylase activity, plays a key role in the degradation of misfolded proteins: when misfolded proteins are too abundant to be degraded by the chaperone refolding system and the ubiquitin-proteasome, mediates the transport of misfolded proteins to a cytoplasmic juxtanuclear structure called aggresome. Probably acts as an adapter that recognizes polyubiquitinated misfolded proteins and target them to the aggresome, facilitating their clearance by autophagy. In Mus musculus (Mouse), this protein is Protein deacetylase HDAC6.